The primary structure comprises 914 residues: Isoleucine--tRNA ligase (914 aa).

The short motif at 64-74 (PYANGNFHLGH) is the 'HIGH' region element. An L-isoleucyl-5'-AMP-binding site is contributed by Glu-557. Positions 598–602 (PMSKS) match the 'KMSKS' region motif. Lys-601 lines the ATP pocket. Cys-889, Cys-892, Cys-906, and Cys-909 together coordinate Zn(2+).

This sequence belongs to the class-I aminoacyl-tRNA synthetase family. IleS type 1 subfamily. In terms of assembly, monomer. The cofactor is Zn(2+).

Its subcellular location is the cytoplasm. The catalysed reaction is tRNA(Ile) + L-isoleucine + ATP = L-isoleucyl-tRNA(Ile) + AMP + diphosphate. Its function is as follows. Catalyzes the attachment of isoleucine to tRNA(Ile). As IleRS can inadvertently accommodate and process structurally similar amino acids such as valine, to avoid such errors it has two additional distinct tRNA(Ile)-dependent editing activities. One activity is designated as 'pretransfer' editing and involves the hydrolysis of activated Val-AMP. The other activity is designated 'posttransfer' editing and involves deacylation of mischarged Val-tRNA(Ile). In Leptospira interrogans serogroup Icterohaemorrhagiae serovar copenhageni (strain Fiocruz L1-130), this protein is Isoleucine--tRNA ligase.